Here is a 481-residue protein sequence, read N- to C-terminus: UDP-N-acetylmuramate--L-alanine ligase (481 aa).

115–121 (GTHGKTT) serves as a coordination point for ATP.

The protein belongs to the MurCDEF family.

It is found in the cytoplasm. The enzyme catalyses UDP-N-acetyl-alpha-D-muramate + L-alanine + ATP = UDP-N-acetyl-alpha-D-muramoyl-L-alanine + ADP + phosphate + H(+). The protein operates within cell wall biogenesis; peptidoglycan biosynthesis. Cell wall formation. In Rhodospirillum rubrum (strain ATCC 11170 / ATH 1.1.1 / DSM 467 / LMG 4362 / NCIMB 8255 / S1), this protein is UDP-N-acetylmuramate--L-alanine ligase.